The following is a 238-amino-acid chain: Ribosomal RNA small subunit methyltransferase G (238 aa).

S-adenosyl-L-methionine is bound by residues G106, L111, 157–158, and R170; that span reads IE.

It belongs to the methyltransferase superfamily. RNA methyltransferase RsmG family.

The protein resides in the cytoplasm. It catalyses the reaction guanosine(527) in 16S rRNA + S-adenosyl-L-methionine = N(7)-methylguanosine(527) in 16S rRNA + S-adenosyl-L-homocysteine. Its function is as follows. Specifically methylates the N7 position of guanine in position 527 of 16S rRNA. This Psychrobacter cryohalolentis (strain ATCC BAA-1226 / DSM 17306 / VKM B-2378 / K5) protein is Ribosomal RNA small subunit methyltransferase G.